The following is a 119-amino-acid chain: Large ribosomal subunit protein bL20 (119 aa).

It belongs to the bacterial ribosomal protein bL20 family.

Binds directly to 23S ribosomal RNA and is necessary for the in vitro assembly process of the 50S ribosomal subunit. It is not involved in the protein synthesizing functions of that subunit. The polypeptide is Large ribosomal subunit protein bL20 (Clostridium beijerinckii (strain ATCC 51743 / NCIMB 8052) (Clostridium acetobutylicum)).